The primary structure comprises 74 residues: uncharacterized protein (74 aa).

The signal sequence occupies residues 1–19 (MNPGFDAVDQETAAAQAVA).

This is an uncharacterized protein from Mycobacterium tuberculosis (strain ATCC 25618 / H37Rv).